A 351-amino-acid polypeptide reads, in one-letter code: DNA polymerase IV (351 aa).

Residues 4–185 enclose the UmuC domain; sequence IIHVDMDCFF…LPLAKIPGVG (182 aa). Mg(2+)-binding residues include Asp8 and Asp103. The active site involves Glu104.

The protein belongs to the DNA polymerase type-Y family. As to quaternary structure, monomer. Mg(2+) is required as a cofactor.

Its subcellular location is the cytoplasm. The enzyme catalyses DNA(n) + a 2'-deoxyribonucleoside 5'-triphosphate = DNA(n+1) + diphosphate. In terms of biological role, poorly processive, error-prone DNA polymerase involved in untargeted mutagenesis. Copies undamaged DNA at stalled replication forks, which arise in vivo from mismatched or misaligned primer ends. These misaligned primers can be extended by PolIV. Exhibits no 3'-5' exonuclease (proofreading) activity. May be involved in translesional synthesis, in conjunction with the beta clamp from PolIII. In Escherichia coli O157:H7, this protein is DNA polymerase IV.